The primary structure comprises 188 residues: HTH-type transcriptional repressor AcnR (188 aa).

The HTH tetR-type domain maps to 10–70 (TNSRQEILEG…ALAREDAARM (61 aa)). The segment at residues 33 to 52 (TVRRLEEATGKSRGAIFHHF) is a DNA-binding region (H-T-H motif). Residues 79 to 80 (LV), R130, and N134 each bind citrate. Mg(2+) is bound at residue E181. R185 lines the citrate pocket.

As to quaternary structure, homodimer.

Its function is as follows. AcnR negatively controls the expression of the aconitase gene acn. Binds to the imperfect inverted repeat in the acn promoter region. This chain is HTH-type transcriptional repressor AcnR, found in Corynebacterium glutamicum (strain ATCC 13032 / DSM 20300 / JCM 1318 / BCRC 11384 / CCUG 27702 / LMG 3730 / NBRC 12168 / NCIMB 10025 / NRRL B-2784 / 534).